A 474-amino-acid polypeptide reads, in one-letter code: Adenylyl cyclase-associated protein 1 (474 aa).

Position 2 is an N-acetylalanine (Ala2). The residue at position 31 (Tyr31) is a Phosphotyrosine. Ser34 carries the post-translational modification Phosphoserine. Residue Lys80 is modified to N6-acetyllysine. Disordered regions lie at residues 215 to 253 and 277 to 316; these read ELSG…SASR and MKTH…ATKK. The span at 217–227 shows a compositional bias: low complexity; it reads SGLPSGPSVGS. Positions 228-241 are enriched in pro residues; it reads GPPPPPPGPPPPPI. The residue at position 286 (Lys286) is an N6-methyllysine. Residues Ser289, Ser294, and Ser300 each carry the phosphoserine modification. Pro residues predominate over residues 299–311; it reads FSAPKPQTSPSPK. At Thr306 the chain carries Phosphothreonine. A phosphoserine mark is found at Ser307 and Ser309. Residues 312 to 452 enclose the C-CAP/cofactor C-like domain; it reads PATKKEPALL…EGGDFNEFPV (141 aa). A Glycyl lysine isopeptide (Lys-Gly) (interchain with G-Cter in SUMO1) cross-link involves residue Lys347.

Belongs to the CAP family. In terms of assembly, homodimer. Binds actin monomers. In terms of tissue distribution, ubiquitous.

It is found in the cell membrane. Functionally, directly regulates filament dynamics and has been implicated in a number of complex developmental and morphological processes, including mRNA localization and the establishment of cell polarity. This Mus musculus (Mouse) protein is Adenylyl cyclase-associated protein 1 (Cap1).